A 426-amino-acid chain; its full sequence is Putative 3-oxoacyl-[acyl-carrier-protein] synthase, mitochondrial (426 aa).

The transit peptide at 1 to 18 directs the protein to the mitochondrion; sequence MKRVVITGLGAVTPLGNG. The 405-residue stretch at 19-423 folds into the Ketosynthase family 3 (KS3) domain; sequence VKTNWRNLIQ…GTNASLCFKK (405 aa). Catalysis depends on for beta-ketoacyl synthase activity residues Cys170, His311, and His351.

This sequence belongs to the thiolase-like superfamily. Beta-ketoacyl-ACP synthases family.

It localises to the mitochondrion. The catalysed reaction is a fatty acyl-[ACP] + malonyl-[ACP] + H(+) = a 3-oxoacyl-[ACP] + holo-[ACP] + CO2. It catalyses the reaction butanoyl-[ACP] + malonyl-[ACP] + H(+) = 3-oxohexanoyl-[ACP] + holo-[ACP] + CO2. The enzyme catalyses hexanoyl-[ACP] + malonyl-[ACP] + H(+) = 3-oxooctanoyl-[ACP] + holo-[ACP] + CO2. It carries out the reaction octanoyl-[ACP] + malonyl-[ACP] + H(+) = 3-oxodecanoyl-[ACP] + holo-[ACP] + CO2. The catalysed reaction is decanoyl-[ACP] + malonyl-[ACP] + H(+) = 3-oxododecanoyl-[ACP] + holo-[ACP] + CO2. It catalyses the reaction dodecanoyl-[ACP] + malonyl-[ACP] + H(+) = 3-oxotetradecanoyl-[ACP] + holo-[ACP] + CO2. The enzyme catalyses tetradecanoyl-[ACP] + malonyl-[ACP] + H(+) = 3-oxohexadecanoyl-[ACP] + holo-[ACP] + CO2. The protein operates within lipid metabolism; fatty acid biosynthesis. Functionally, may play a role in the biosynthesis of lipoic acid as well as longer chain fatty acids required for optimal mitochondrial function. In Schizosaccharomyces pombe (strain 972 / ATCC 24843) (Fission yeast), this protein is Putative 3-oxoacyl-[acyl-carrier-protein] synthase, mitochondrial.